The following is a 464-amino-acid chain: DNA primase DnaG (464 aa).

One can recognise a Toprim domain in the interval aspartate 198–glutamate 272. 3 residues coordinate Mg(2+): glutamate 204, aspartate 246, and aspartate 248. Over residues arginine 315–valine 333 the composition is skewed to basic and acidic residues. Positions arginine 315 to threonine 351 are disordered.

The protein belongs to the archaeal DnaG primase family. In terms of assembly, forms a ternary complex with MCM helicase and DNA. Component of the archaeal exosome complex. The cofactor is Mg(2+).

It catalyses the reaction ssDNA + n NTP = ssDNA/pppN(pN)n-1 hybrid + (n-1) diphosphate.. Functionally, RNA polymerase that catalyzes the synthesis of short RNA molecules used as primers for DNA polymerase during DNA replication. Also part of the exosome, which is a complex involved in RNA degradation. Acts as a poly(A)-binding protein that enhances the interaction between heteromeric, adenine-rich transcripts and the exosome. The chain is DNA primase DnaG from Thermococcus kodakarensis (strain ATCC BAA-918 / JCM 12380 / KOD1) (Pyrococcus kodakaraensis (strain KOD1)).